The sequence spans 136 residues: Putative covalently bound cell wall protein 22 (136 aa).

A signal peptide spans 1-18; that stretch reads MQFSTVASIAAIAAVASA. N21 and N82 each carry an N-linked (GlcNAc...) asparagine glycan. The tract at residues 73 to 110 is disordered; the sequence is PLPTTEAPKNTTSPAPTEKPTEKPTEKPTQQGSSTQTV. Residues 99–110 are compositionally biased toward low complexity; the sequence is KPTQQGSSTQTV. The GPI-anchor amidated glycine moiety is linked to residue G115. Residues 116 to 136 constitute a propeptide, removed in mature form; sequence AAVKALPAAGALLAGAAALLL.

Belongs to the PGA59 family. Post-translationally, the GPI-anchor is attached to the protein in the endoplasmic reticulum and serves to target the protein to the cell surface. There, the glucosamine-inositol phospholipid moiety is cleaved off and the GPI-modified mannoprotein is covalently attached via its lipidless GPI glycan remnant to the 1,6-beta-glucan of the outer cell wall layer.

The protein localises to the secreted. It localises to the cell wall. The protein resides in the membrane. Its function is as follows. Cell wall protein necessary for cell wall integrity. This Saccharomyces cerevisiae (strain ATCC 204508 / S288c) (Baker's yeast) protein is Putative covalently bound cell wall protein 22 (CCW22).